We begin with the raw amino-acid sequence, 357 residues long: Anthranilate phosphoribosyltransferase (357 aa).

Residues Gly-94, 97–98 (GD), Thr-102, 104–107 (NLST), 122–130 (KHGNRAASS), and Gly-134 each bind 5-phospho-alpha-D-ribose 1-diphosphate. Anthranilate is bound at residue Gly-94. Ser-106 is a Mg(2+) binding site. Asn-125 is an anthranilate binding site. Arg-180 is an anthranilate binding site. 2 residues coordinate Mg(2+): Asp-238 and Glu-239.

The protein belongs to the anthranilate phosphoribosyltransferase family. In terms of assembly, homodimer. The cofactor is Mg(2+).

The catalysed reaction is N-(5-phospho-beta-D-ribosyl)anthranilate + diphosphate = 5-phospho-alpha-D-ribose 1-diphosphate + anthranilate. Its pathway is amino-acid biosynthesis; L-tryptophan biosynthesis; L-tryptophan from chorismate: step 2/5. Functionally, catalyzes the transfer of the phosphoribosyl group of 5-phosphorylribose-1-pyrophosphate (PRPP) to anthranilate to yield N-(5'-phosphoribosyl)-anthranilate (PRA). This chain is Anthranilate phosphoribosyltransferase, found in Mycobacterium sp. (strain KMS).